Here is a 44-residue protein sequence, read N- to C-terminus: Protein PsbN (44 aa).

Residues 6-26 traverse the membrane as a helical segment; the sequence is FFFTFFLWFLLLSATGYSIYV.

It belongs to the PsbN family.

The protein resides in the plastid. It localises to the chloroplast thylakoid membrane. May play a role in photosystem I and II biogenesis. The sequence is that of Protein PsbN from Tetradesmus obliquus (Green alga).